The following is a 48-amino-acid chain: Light-harvesting protein B-870 beta chain (48 aa).

Over 2-21 (AERKGSISGLTDDEAQEFHK) the chain is Cytoplasmic. A bacteriochlorophyll contacts are provided by His-20 and His-38. Residues 22–44 (FWVQGFVGFTAVAVVAHFLVWVW) form a helical membrane-spanning segment. Topologically, residues 45 to 48 (RPWL) are periplasmic.

An alpha/beta heterodimer. The core complex is formed by different alpha and beta chains, binding bacteriochlorophyll molecules, and arranged most probably in tetrameric structures disposed around the reaction center. The non-pigmented gamma chains may constitute additional components.

It is found in the cell inner membrane. In terms of biological role, antenna complexes are light-harvesting systems, which transfer the excitation energy to the reaction centers. This Rubrivivax gelatinosus (Rhodocyclus gelatinosus) protein is Light-harvesting protein B-870 beta chain (pufB).